An 879-amino-acid chain; its full sequence is Translation initiation factor IF-2 (879 aa).

2 disordered regions span residues A45 to R216 and S228 to V293. Basic and acidic residues-rich tracts occupy residues N60 to S72, R83 to P99, and A107 to Q163. Positions M164 to Q173 are enriched in low complexity. Basic and acidic residues-rich tracts occupy residues E174 to R216, S228 to N271, and R280 to K291. The tr-type G domain maps to V380–T549. The G1 stretch occupies residues G389 to T396. G389 to T396 contacts GTP. Residues G414–H418 are G2. A G3 region spans residues D435 to G438. GTP-binding positions include D435–H439 and N489–D492. Residues N489 to D492 are G4. The tract at residues S525–K527 is G5.

Belongs to the TRAFAC class translation factor GTPase superfamily. Classic translation factor GTPase family. IF-2 subfamily.

The protein localises to the cytoplasm. In terms of biological role, one of the essential components for the initiation of protein synthesis. Protects formylmethionyl-tRNA from spontaneous hydrolysis and promotes its binding to the 30S ribosomal subunits. Also involved in the hydrolysis of GTP during the formation of the 70S ribosomal complex. This chain is Translation initiation factor IF-2, found in Dichelobacter nodosus (strain VCS1703A).